The sequence spans 314 residues: Taste receptor type 2 member 42 (314 aa).

At 1 to 7 (MATEMDK) the chain is on the extracellular side. A helical membrane pass occupies residues 8-28 (IFLTLATVEFIIGMLGNVFIG). Residues 29 to 50 (LVNCSEGIKNQKVFSVDFILTC) lie on the Cytoplasmic side of the membrane. A helical transmembrane segment spans residues 51–71 (LAISTIGHLLVILFDSCVVGL). Residues 72-101 (APHLYATDRVRRPVTMLWHMXNHLTTWLAT) lie on the Extracellular side of the membrane. Residues 102–122 (CLSIFYFFKIAHFPHSLFLWL) form a helical membrane-spanning segment. The Cytoplasmic segment spans residues 123–127 (RWRMN). A helical membrane pass occupies residues 128–148 (RVIAILLTLSLFLLIFDCLVL). Residues 149–187 (EMFIDXSLNIIDKSNLTLYLDESKTPYDKLSLLKILLSL) lie on the Extracellular side of the membrane. N-linked (GlcNAc...) asparagine glycosylation occurs at Asn-163. A helical membrane pass occupies residues 188–208 (NSFIPFSLCLTSLLFLFLSLV). Topologically, residues 209–238 (RHTRNLKLSSLGSRDSSTEAHRRAMKMVMS) are cytoplasmic. The helical transmembrane segment at 239–259 (LLFLFIVHFFSLQVANWTFCI) threads the bilayer. Topologically, residues 260–265 (LGNNKY) are extracellular. Residues 266 to 286 (TQFVTLALHAFPSCHSFILIL) form a helical membrane-spanning segment. Over 287–314 (GNSKLRQTAVRLLWHLRNYTKRPNPLPL) the chain is Cytoplasmic.

It belongs to the G-protein coupled receptor T2R family.

Its subcellular location is the membrane. Receptor that may play a role in the perception of bitterness and is gustducin-linked. May play a role in sensing the chemical composition of the gastrointestinal content. The activity of this receptor may stimulate alpha gustducin, mediate PLC-beta-2 activation and lead to the gating of TRPM5. The chain is Taste receptor type 2 member 42 (TAS2R42) from Macaca mulatta (Rhesus macaque).